The sequence spans 279 residues: ATP-dependent Clp protease proteolytic subunit-related protein 2, chloroplastic (279 aa).

A chloroplast-targeting transit peptide spans 1 to 54 (MAVSFNTTLHQPSLSPSCSIKLYSGLKPQSASFLASGYQNLNKEFYGRVYKSLQ).

It belongs to the peptidase S14 family. As to quaternary structure, component of the chloroplastic Clp protease core complex which consist of at least 16 proteins: CLPP4 (3 copies), CLPP5 (3 copies), CLPR4 (2 copies), ClpP1 (1 copy), CLPP6 (1 copy), CLPR2 (1 copy), CLPT1 (1 copy), CLPT2 (1 copy) and 3 copies of CLPP3 and/or CLPR1 and/or CLPR3. The core complex is organized in two heptameric rings, one containing CLPP3,4,5,6 in a 1:2:3:1 ratio and the other CLPP1 and CLPR1,2,3,4 in a 3:1:1:1:1 ratio. As to expression, expressed at least in leaves and roots.

It localises to the plastid. The protein localises to the chloroplast. Functionally, required for chloroplast development and integrity. Involved in the regulation of plastoglobules formation. The protein is ATP-dependent Clp protease proteolytic subunit-related protein 2, chloroplastic of Arabidopsis thaliana (Mouse-ear cress).